The primary structure comprises 176 residues: N,N-dimethyl phenylurea N-demethylase subunit beta (176 aa).

Belongs to the bacterial ring-hydroxylating dioxygenase beta subunit family. PdmA (subunit alpha) and PdmB (subunit beta) form the oxygenase component of a bacterial Rieske non-heme iron oxygenase (RO) system.

It catalyses the reaction a 1,1-dimethyl-3-phenylurea + 2 reduced [2Fe-2S]-[ferredoxin] + O2 + 2 H(+) = a 1-methyl-3-phenylurea + formaldehyde + 2 oxidized [2Fe-2S]-[ferredoxin] + H2O. It carries out the reaction isoproturon + 2 reduced [2Fe-2S]-[ferredoxin] + O2 + 2 H(+) = 1-methyl-3-[4-(propan-2-yl)phenyl]urea + formaldehyde + 2 oxidized [2Fe-2S]-[ferredoxin] + H2O. The enzyme catalyses chlorotoluron + 2 reduced [2Fe-2S]-[ferredoxin] + O2 + 2 H(+) = 3-(3-chloro-4-methylphenyl)-1-methylurea + formaldehyde + 2 oxidized [2Fe-2S]-[ferredoxin] + H2O. The catalysed reaction is metoxuron + 2 reduced [2Fe-2S]-[ferredoxin] + O2 + 2 H(+) = 3-(3-chloro-4-methoxylphenyl)-1-methylurea + formaldehyde + 2 oxidized [2Fe-2S]-[ferredoxin] + H2O. It catalyses the reaction monuron + 2 reduced [2Fe-2S]-[ferredoxin] + O2 + 2 H(+) = 3-(4-chlorophenyl)-1-methylurea + formaldehyde + 2 oxidized [2Fe-2S]-[ferredoxin] + H2O. It carries out the reaction diuron + 2 reduced [2Fe-2S]-[ferredoxin] + O2 + 2 H(+) = 3-(3,4-dichlorophenyl)-1-methylurea + formaldehyde + 2 oxidized [2Fe-2S]-[ferredoxin] + H2O. The enzyme catalyses fluometuron + 2 reduced [2Fe-2S]-[ferredoxin] + O2 + 2 H(+) = 3-[3-(trifluoromethyl)phenyl]-1-methylurea + formaldehyde + 2 oxidized [2Fe-2S]-[ferredoxin] + H2O. The catalysed reaction is fenuron + 2 reduced [2Fe-2S]-[ferredoxin] + O2 + 2 H(+) = 1-methyl-3-phenylurea + formaldehyde + 2 oxidized [2Fe-2S]-[ferredoxin] + H2O. It functions in the pathway xenobiotic degradation. Its activity is regulated as follows. Activity is stimulated in vitro by coexpression of a [3Fe-4S]-type ferredoxin. Part of the multicomponent N,N-dimethyl phenylurea N-demethylase responsible for the initial N-demethylation step during the bacterial metabolism of N,N-dimethyl-substituted phenylurea herbicides. Catalyzes the mono-N-demethylation of N,N-dimethyl-substituted phenylurea herbicides to their mono-N-demethylated derivatives. Is active on isoproturon (IPU), chlorotoluron, metoxuron, monoron, diuron, fluometuron and fenuron, but cannot transform the N-methoxy-N-methyl-substituted herbicides. The polypeptide is N,N-dimethyl phenylurea N-demethylase subunit beta (Sphingobium sp. (strain YBL2)).